A 376-amino-acid chain; its full sequence is Succinyl-diaminopimelate desuccinylase (376 aa).

H66 lines the Zn(2+) pocket. The active site involves D68. D99 contributes to the Zn(2+) binding site. E133 acts as the Proton acceptor in catalysis. E134, E162, and H349 together coordinate Zn(2+).

It belongs to the peptidase M20A family. DapE subfamily. In terms of assembly, homodimer. It depends on Zn(2+) as a cofactor. Co(2+) is required as a cofactor.

It carries out the reaction N-succinyl-(2S,6S)-2,6-diaminopimelate + H2O = (2S,6S)-2,6-diaminopimelate + succinate. The protein operates within amino-acid biosynthesis; L-lysine biosynthesis via DAP pathway; LL-2,6-diaminopimelate from (S)-tetrahydrodipicolinate (succinylase route): step 3/3. Its function is as follows. Catalyzes the hydrolysis of N-succinyl-L,L-diaminopimelic acid (SDAP), forming succinate and LL-2,6-diaminopimelate (DAP), an intermediate involved in the bacterial biosynthesis of lysine and meso-diaminopimelic acid, an essential component of bacterial cell walls. The sequence is that of Succinyl-diaminopimelate desuccinylase from Vesicomyosocius okutanii subsp. Calyptogena okutanii (strain HA).